The primary structure comprises 320 residues: Putative HTH-type transcriptional regulatory protein VNG_2112C (320 aa).

Residues 132–189 (LADRREDERLSLGQLASELGVSRRTVSKYEDGMNASIEVAMRLEDLFGGELTAPVDVM) enclose the HTH cro/C1-type domain. A DNA-binding region (H-T-H motif) is located at residues 143–162 (LGQLASELGVSRRTVSKYED).

The chain is Putative HTH-type transcriptional regulatory protein VNG_2112C from Halobacterium salinarum (strain ATCC 700922 / JCM 11081 / NRC-1) (Halobacterium halobium).